Here is a 73-residue protein sequence, read N- to C-terminus: Hypotensin-like peptide (73 aa).

The N-terminal stretch at Met1–Gly25 is a signal peptide.

Expressed by the venom gland.

The protein localises to the secreted. Its function is as follows. May potentiate the hypotensive effect of bradykinin. This is Hypotensin-like peptide from Tityus serrulatus (Brazilian scorpion).